Reading from the N-terminus, the 398-residue chain is Putative molybdopterin biosynthesis protein MJ0666 (398 aa).

It belongs to the MoeA family.

The protein operates within cofactor biosynthesis; molybdopterin biosynthesis. The chain is Putative molybdopterin biosynthesis protein MJ0666 from Methanocaldococcus jannaschii (strain ATCC 43067 / DSM 2661 / JAL-1 / JCM 10045 / NBRC 100440) (Methanococcus jannaschii).